Consider the following 273-residue polypeptide: Shikimate kinase (273 aa).

Position 85 to 95 (85 to 95 (PVGKGLKSSSA)) interacts with ATP.

It belongs to the GHMP kinase family. Archaeal shikimate kinase subfamily.

The protein localises to the cytoplasm. It catalyses the reaction shikimate + ATP = 3-phosphoshikimate + ADP + H(+). It functions in the pathway metabolic intermediate biosynthesis; chorismate biosynthesis; chorismate from D-erythrose 4-phosphate and phosphoenolpyruvate: step 5/7. This Pyrococcus furiosus (strain ATCC 43587 / DSM 3638 / JCM 8422 / Vc1) protein is Shikimate kinase.